Here is a 100-residue protein sequence, read N- to C-terminus: NADH-quinone oxidoreductase subunit K 1 (100 aa).

Helical transmembrane passes span 4–24, 29–49, and 60–80; these read LNNY…GVLV, IVIF…FIAF, and IFVF…LALM.

The protein belongs to the complex I subunit 4L family. As to quaternary structure, NDH-1 is composed of 14 different subunits. Subunits NuoA, H, J, K, L, M, N constitute the membrane sector of the complex.

The protein localises to the cell inner membrane. It catalyses the reaction a quinone + NADH + 5 H(+)(in) = a quinol + NAD(+) + 4 H(+)(out). NDH-1 shuttles electrons from NADH, via FMN and iron-sulfur (Fe-S) centers, to quinones in the respiratory chain. The immediate electron acceptor for the enzyme in this species is believed to be ubiquinone. Couples the redox reaction to proton translocation (for every two electrons transferred, four hydrogen ions are translocated across the cytoplasmic membrane), and thus conserves the redox energy in a proton gradient. The sequence is that of NADH-quinone oxidoreductase subunit K 1 from Geotalea daltonii (strain DSM 22248 / JCM 15807 / FRC-32) (Geobacter daltonii).